A 446-amino-acid polypeptide reads, in one-letter code: Glucose-6-phosphate isomerase (446 aa).

The Proton donor role is filled by Glu-287. Active-site residues include His-308 and Lys-422.

It belongs to the GPI family.

Its subcellular location is the cytoplasm. The catalysed reaction is alpha-D-glucose 6-phosphate = beta-D-fructose 6-phosphate. It functions in the pathway carbohydrate biosynthesis; gluconeogenesis. The protein operates within carbohydrate degradation; glycolysis; D-glyceraldehyde 3-phosphate and glycerone phosphate from D-glucose: step 2/4. Catalyzes the reversible isomerization of glucose-6-phosphate to fructose-6-phosphate. In Lactobacillus helveticus (strain DPC 4571), this protein is Glucose-6-phosphate isomerase.